The chain runs to 161 residues: Allophycocyanin beta chain (161 aa).

Asn-71 carries the post-translational modification N4-methylasparagine. Cys-81 is a binding site for (2R,3E)-phycocyanobilin.

This sequence belongs to the phycobiliprotein family. In terms of assembly, heterodimer of an alpha and a beta chain. In terms of processing, contains one covalently linked phycocyanobilin chromophore.

The protein localises to the cellular thylakoid membrane. Light-harvesting photosynthetic bile pigment-protein from the phycobiliprotein complex. Allophycocyanin has a maximum absorption at approximately 650 nanometers. The sequence is that of Allophycocyanin beta chain (apcB) from Mastigocladus laminosus (Fischerella sp.).